The following is a 201-amino-acid chain: Recombination protein RecR (201 aa).

A C4-type zinc finger spans residues Cys-60–Cys-75. The Toprim domain maps to Arg-83–Pro-178.

Belongs to the RecR family.

Functionally, may play a role in DNA repair. It seems to be involved in an RecBC-independent recombinational process of DNA repair. It may act with RecF and RecO. In Xanthobacter autotrophicus (strain ATCC BAA-1158 / Py2), this protein is Recombination protein RecR.